The sequence spans 696 residues: DNA-directed RNA polymerase subunit beta' (696 aa).

The Zn(2+) site is built by C69, C71, C87, and C90. Mg(2+)-binding residues include D504, D506, and D508.

The protein belongs to the RNA polymerase beta' chain family. RpoC1 subfamily. In plastids the minimal PEP RNA polymerase catalytic core is composed of four subunits: alpha, beta, beta', and beta''. When a (nuclear-encoded) sigma factor is associated with the core the holoenzyme is formed, which can initiate transcription. Mg(2+) serves as cofactor. The cofactor is Zn(2+).

It is found in the plastid. Its subcellular location is the chloroplast. The catalysed reaction is RNA(n) + a ribonucleoside 5'-triphosphate = RNA(n+1) + diphosphate. In terms of biological role, DNA-dependent RNA polymerase catalyzes the transcription of DNA into RNA using the four ribonucleoside triphosphates as substrates. The protein is DNA-directed RNA polymerase subunit beta' of Pinus koraiensis (Korean pine).